The following is a 485-amino-acid chain: Forkhead box protein N3 (485 aa).

The disordered stretch occupies residues 1 to 21; the sequence is MGPVMPPSKKPESPGISVSSG. A phosphoserine mark is found at S83, S85, and S97. Residues 86-108 form a disordered region; the sequence is PVQDLDDDTPPSPAHSDMPYDAR. Residues 114-210 constitute a DNA-binding region (fork-head); sequence KPPYSFSCLI…QALKKTPYHS (97 aa). The disordered stretch occupies residues 315–454; it reads RTESEPSCGS…DEEMKEAAGS (140 aa). Over residues 338–359 the composition is skewed to low complexity; sequence SSAKSSHARSTSPASDCVSSSS. Over residues 382 to 404 the composition is skewed to basic and acidic residues; the sequence is HESHSETEEDDRKCSPKEAKDAL. The segment covering 412–424 has biased composition (basic residues); the sequence is QHKKRQHFAKARK. S443 carries the post-translational modification Phosphoserine.

In terms of assembly, interacts through its C-terminus with the C-terminus of SNW1/SKIP.

The protein localises to the nucleus. In terms of biological role, acts as a transcriptional repressor. May be involved in DNA damage-inducible cell cycle arrests (checkpoints). The sequence is that of Forkhead box protein N3 (FOXN3) from Sus scrofa (Pig).